The chain runs to 131 residues: Hypocretin neuropeptide precursor (131 aa).

The N-terminal stretch at 1–33 is a signal peptide; it reads MNPPFAKVSWATVTLLLLLLLLPPAVLSPGAAA. Q34 carries the post-translational modification Pyrrolidone carboxylic acid. Disulfide bonds link C39–C45 and C40–C47. Residue L66 is modified to Leucine amide. M97 carries the post-translational modification Methionine amide. Positions 98 to 131 are cleaved as a propeptide — removed in mature form; it reads GRRAGAEPAPRLCPGRRCLAAAASSVAPGGRSGI.

Belongs to the orexin family. In terms of processing, specific enzymatic cleavages at paired basic residues yield the different active peptides.

It localises to the rough endoplasmic reticulum. It is found in the cytoplasmic vesicle. The protein resides in the synapse. Its function is as follows. Neuropeptides that play a significant role in the regulation of food intake and sleep-wakefulness, possibly by coordinating the complex behavioral and physiologic responses of these complementary homeostatic functions. A broader role in the homeostatic regulation of energy metabolism, autonomic function, hormonal balance and the regulation of body fluids, is also suggested. Functionally, binds to orexin receptors HCRTR1/OX1R and HCRTR2/OX2R with a high affinity. Stimulates food intake. Modulates pituitary luteinizing hormone secretion in an ovarian steroid-dependent manner. In terms of biological role, binds to orexin receptor HCRTR2/OX2R only. Stimulates food intake. Modulates pituitary luteinizing hormone secretion in an ovarian steroid-dependent manner. This chain is Hypocretin neuropeptide precursor (HCRT), found in Sus scrofa (Pig).